The sequence spans 91 residues: Probable Fe(2+)-trafficking protein (91 aa).

The protein belongs to the Fe(2+)-trafficking protein family.

Its function is as follows. Could be a mediator in iron transactions between iron acquisition and iron-requiring processes, such as synthesis and/or repair of Fe-S clusters in biosynthetic enzymes. The chain is Probable Fe(2+)-trafficking protein from Cellvibrio japonicus (strain Ueda107) (Pseudomonas fluorescens subsp. cellulosa).